We begin with the raw amino-acid sequence, 1381 residues long: Contactin-associated protein 1 (1381 aa).

Residues 1–20 form the signal peptide; it reads MMSLRLFSILLAAVVSGAQG. The Extracellular portion of the chain corresponds to 21–1284; the sequence is WGYYGCNEEL…PYYHDDGWIA (1264 aa). Positions 26–169 constitute an F5/8 type C domain; the sequence is CNEELVGPLY…IGLRLGIYGC (144 aa). An intrachain disulfide couples cysteine 26 to cysteine 169. Residues asparagine 121, asparagine 129, and asparagine 277 are each glycosylated (N-linked (GlcNAc...) asparagine). Laminin G-like domains follow at residues 204–356 and 390–539; these read FKTE…AFRC and FRTW…FDTC. Cysteines 324 and 356 form a disulfide. Asparagine 421, asparagine 500, and asparagine 519 each carry an N-linked (GlcNAc...) asparagine glycan. 4 disulfide bridges follow: cysteine 507/cysteine 539, cysteine 545/cysteine 556, cysteine 550/cysteine 565, and cysteine 567/cysteine 577. In terms of domain architecture, EGF-like 1 spans 544 to 576; sequence RCSPNMCEHDGRCYQSWDDFICYCELTGYKGVT. Residues 577–796 form the Fibrinogen C-terminal domain; it reads CHEPLYKESC…NTISFRTGAA (220 aa). N-linked (GlcNAc...) asparagine glycosylation is found at asparagine 598, asparagine 654, asparagine 665, asparagine 764, asparagine 805, asparagine 844, asparagine 861, asparagine 949, and asparagine 957. The Laminin G-like 3 domain occupies 814–958; that stretch reads FRTSAPSGVF…NASEGTFPNC (145 aa). Cystine bridges form between cysteine 931-cysteine 958, cysteine 962-cysteine 975, cysteine 969-cysteine 984, and cysteine 986-cysteine 996. Residues 962–996 form the EGF-like 2 domain; it reads CTHPRFPCFHGGRCVERYSYYTCDCDLTAFDGPYC. Residues asparagine 1079 and asparagine 1148 are each glycosylated (N-linked (GlcNAc...) asparagine). The region spanning 1089–1251 is the Laminin G-like 4 domain; the sequence is FSTSSAPAVL…VQGELSESNC (163 aa). A disulfide bridge connects residues cysteine 1210 and cysteine 1251. The helical transmembrane segment at 1285–1305 threads the bilayer; it reads ILLGFLVAFLLLGLVGMLVLF. Topologically, residues 1306–1381 are cytoplasmic; sequence YLQNHRYKGS…PQILEESRSE (76 aa). Residues 1317–1381 form a disordered region; sequence HTNEPKATHD…PQILEESRSE (65 aa). Positions 1319 to 1329 are enriched in basic and acidic residues; the sequence is NEPKATHDSHP. Residues 1329 to 1366 carry the SH3-binding motif; the sequence is PGGKAPLPPSGPAQAPAPTPAPTQVPTPAPAPASGPGP. The segment covering 1334–1363 has biased composition (pro residues); sequence PLPPSGPAQAPAPTPAPTQVPTPAPAPASG. Serine 1380 carries the phosphoserine modification.

It belongs to the neurexin family. As to quaternary structure, interacts with CNTN1/contactin in cis form. As to expression, predominantly expressed in brain. In myelinated nerve fibers of the CNS predominantly found in paranodal axoglial junctions. In unmyelinated nerve fibers of the CNS diffusely distributed along the entire surface. Weak expression is detected in ovary, pancreas, colon, lung, heart, intestine and testis.

It is found in the membrane. The protein localises to the cell junction. Its subcellular location is the paranodal septate junction. Required, with CNTNAP2, for radial and longitudinal organization of myelinated axons. Plays a role in the formation of functional distinct domains critical for saltatory conduction of nerve impulses in myelinated nerve fibers. Demarcates the paranodal region of the axo-glial junction. In association with contactin involved in the signaling between axons and myelinating glial cells. In Rattus norvegicus (Rat), this protein is Contactin-associated protein 1 (Cntnap1).